The primary structure comprises 447 residues: N-succinylarginine dihydrolase (447 aa).

Substrate is bound by residues 19-28 (AGLSFGNEAS), asparagine 110, and 137-138 (HR). The active site involves glutamate 174. Substrate is bound at residue arginine 212. Histidine 248 is a catalytic residue. Substrate is bound by residues aspartate 250 and asparagine 359. The active-site Nucleophile is the cysteine 365.

The protein belongs to the succinylarginine dihydrolase family. As to quaternary structure, homodimer.

The catalysed reaction is N(2)-succinyl-L-arginine + 2 H2O + 2 H(+) = N(2)-succinyl-L-ornithine + 2 NH4(+) + CO2. The protein operates within amino-acid degradation; L-arginine degradation via AST pathway; L-glutamate and succinate from L-arginine: step 2/5. Catalyzes the hydrolysis of N(2)-succinylarginine into N(2)-succinylornithine, ammonia and CO(2). The sequence is that of N-succinylarginine dihydrolase from Escherichia coli O8 (strain IAI1).